Consider the following 108-residue polypeptide: UPF0102 protein SO_0299 (108 aa).

Belongs to the UPF0102 family.

This is UPF0102 protein SO_0299 from Shewanella oneidensis (strain ATCC 700550 / JCM 31522 / CIP 106686 / LMG 19005 / NCIMB 14063 / MR-1).